Consider the following 121-residue polypeptide: Small ribosomal subunit protein uS13 (121 aa).

The tract at residues 94–121 is disordered; it reads GLPLRGQRTRTNARTRKGPRRAAQSLKK.

This sequence belongs to the universal ribosomal protein uS13 family. As to quaternary structure, part of the 30S ribosomal subunit. Forms a loose heterodimer with protein S19. Forms two bridges to the 50S subunit in the 70S ribosome.

Its function is as follows. Located at the top of the head of the 30S subunit, it contacts several helices of the 16S rRNA. In the 70S ribosome it contacts the 23S rRNA (bridge B1a) and protein L5 of the 50S subunit (bridge B1b), connecting the 2 subunits; these bridges are implicated in subunit movement. Contacts the tRNAs in the A and P-sites. The chain is Small ribosomal subunit protein uS13 from Paraburkholderia phytofirmans (strain DSM 17436 / LMG 22146 / PsJN) (Burkholderia phytofirmans).